Consider the following 761-residue polypeptide: Centrosomal protein of 85 kDa (761 aa).

2 disordered regions span residues 1–33 (MAMQ…TEWQ) and 95–117 (PSTL…SAKL). The span at 14–33 (ATSPGSNVIQKGSSLGTEWQ) shows a compositional bias: polar residues. The residue at position 16 (S16) is a Phosphoserine. S140 bears the Phosphoserine mark. Disordered stretches follow at residues 226–279 (KAPG…GEQS) and 435–472 (KHSE…REKQ). Positions 256 to 432 (GLSKSLSSQV…QLIRESLKVT (177 aa)) are mediates interaction with NEK2 and is required for its function in the suppression of centrosome disjunction. Coiled coils occupy residues 333–656 (EHLL…RQAQ) and 723–749 (DVIR…LSDR). A required for centrosome localization and for its function in the suppression of centrosome disjunction region spans residues 433-475 (LQKHSEEGKKQEERVKGRDKHINNLKKKCQKESEQNREKQQRI). Basic and acidic residues-rich tracts occupy residues 435–454 (KHSE…DKHI) and 462–472 (QKESEQNREKQ).

This sequence belongs to the CEP85 family. As to quaternary structure, homodimer. Interacts with STIL (via N-terminus); this interaction is essential for robust PLK4 activation and efficient centriole assembly and for PLK4-dependent cell migration. Interacts with PLK4; required for CEP85 to be able to drive centriole duplication and cell migration.

It is found in the cytoplasm. Its subcellular location is the cytoskeleton. It localises to the microtubule organizing center. The protein localises to the centrosome. The protein resides in the spindle pole. It is found in the nucleus. Its subcellular location is the nucleolus. It localises to the centriole. The protein localises to the cell cortex. In terms of biological role, acts as a regulator of centriole duplication through a direct interaction with STIL, a key factor involved in the early steps of centriole formation. The CEP85-STIL protein complex acts as a modulator of PLK4-driven cytoskeletal rearrangements and directional cell motility. Acts as a negative regulator of NEK2 to maintain the centrosome integrity in interphase. Suppresses centrosome disjunction by inhibiting NEK2 kinase activity. The polypeptide is Centrosomal protein of 85 kDa (Cep85) (Mus musculus (Mouse)).